The sequence spans 910 residues: Leucine--tRNA ligase (910 aa).

Residues 42 to 52 (PYPSGKLHMGH) carry the 'HIGH' region motif. Residues 668-672 (KMSKS) carry the 'KMSKS' region motif. K671 lines the ATP pocket.

It belongs to the class-I aminoacyl-tRNA synthetase family.

The protein resides in the cytoplasm. It carries out the reaction tRNA(Leu) + L-leucine + ATP = L-leucyl-tRNA(Leu) + AMP + diphosphate. The chain is Leucine--tRNA ligase from Neisseria meningitidis serogroup A / serotype 4A (strain DSM 15465 / Z2491).